A 311-amino-acid polypeptide reads, in one-letter code: MAWSTGQNLSTPGPFILLGFPGPRSMRIGLFLLFLVMYLLTVVGNLAIISLVGAHRCLQTPMYFFLCNLSFLEIWFTTACVPKTLATFAPRGGVISLAGCATQMYFVFSLGCTEYFLLAVMAYDRYLAICLPLRYGGIMTPGLAMRLALGSWLCGFSAITVPATLIARLSFCGSRVINHFFCDISPWIVLSCTDTQVVELVSFGIAFCVILGSCGITLVSYAYIITTIIKIPSARGRHRAFSTCSSHLTVVLIWYGSTIFLHVRTSVESSLDLTKAITVLNTIVTPVLNPFIYTLRNKDVKEALRRTVKGK.

Residues Met1–Arg27 lie on the Extracellular side of the membrane. Asn8 is a glycosylation site (N-linked (GlcNAc...) asparagine). A helical transmembrane segment spans residues Ile28–Gly53. The Cytoplasmic portion of the chain corresponds to Ala54–Thr60. The chain crosses the membrane as a helical span at residues Pro61–Pro82. Residues Lys83 to Gln103 are Extracellular-facing. A disulfide bond links Cys100 and Cys192. The chain crosses the membrane as a helical span at residues Met104–Tyr123. Residues Asp124 to Gly142 lie on the Cytoplasmic side of the membrane. Residues Leu143–Val161 form a helical membrane-spanning segment. Residues Pro162–Glu199 are Extracellular-facing. The helical transmembrane segment at Leu200–Ala222 threads the bilayer. The Cytoplasmic segment spans residues Tyr223–Arg239. A helical membrane pass occupies residues Ala240–Val263. Residues Arg264–Lys275 lie on the Extracellular side of the membrane. The helical transmembrane segment at Ala276–Leu295 threads the bilayer. Residues Arg296–Lys311 lie on the Cytoplasmic side of the membrane.

This sequence belongs to the G-protein coupled receptor 1 family. As to expression, olfactory epithelium.

Its subcellular location is the cell membrane. In terms of biological role, odorant receptor. This chain is Olfactory receptor 287 (Olr287), found in Rattus norvegicus (Rat).